The chain runs to 359 residues: Small ribosomal subunit protein mS22 (359 aa).

The protein belongs to the mitochondrion-specific ribosomal protein mS22 family. As to quaternary structure, component of the mitochondrial ribosome small subunit (28S) which comprises a 12S rRNA and about 30 distinct proteins.

Its subcellular location is the mitochondrion. This chain is Small ribosomal subunit protein mS22 (MRPS22), found in Bos taurus (Bovine).